Here is a 322-residue protein sequence, read N- to C-terminus: Beta-ketoacyl-[acyl-carrier-protein] synthase III (322 aa).

Catalysis depends on residues cysteine 113 and histidine 249. Residues 250–254 (QANLR) form an ACP-binding region. Asparagine 279 is an active-site residue.

The protein belongs to the thiolase-like superfamily. FabH family. In terms of assembly, homodimer.

The protein localises to the cytoplasm. The enzyme catalyses malonyl-[ACP] + acetyl-CoA + H(+) = 3-oxobutanoyl-[ACP] + CO2 + CoA. Its pathway is lipid metabolism; fatty acid biosynthesis. Functionally, catalyzes the condensation reaction of fatty acid synthesis by the addition to an acyl acceptor of two carbons from malonyl-ACP. Catalyzes the first condensation reaction which initiates fatty acid synthesis and may therefore play a role in governing the total rate of fatty acid production. Possesses both acetoacetyl-ACP synthase and acetyl transacylase activities. Its substrate specificity determines the biosynthesis of branched-chain and/or straight-chain of fatty acids. The sequence is that of Beta-ketoacyl-[acyl-carrier-protein] synthase III from Marinobacter nauticus (strain ATCC 700491 / DSM 11845 / VT8) (Marinobacter aquaeolei).